The following is a 222-amino-acid chain: 7-cyano-7-deazaguanine synthase (222 aa).

9-19 is a binding site for ATP; sequence LSGGLDSATAA. Zn(2+) contacts are provided by C190, C198, C201, and C204.

The protein belongs to the QueC family. The cofactor is Zn(2+).

The catalysed reaction is 7-carboxy-7-deazaguanine + NH4(+) + ATP = 7-cyano-7-deazaguanine + ADP + phosphate + H2O + H(+). Its pathway is purine metabolism; 7-cyano-7-deazaguanine biosynthesis. Its function is as follows. Catalyzes the ATP-dependent conversion of 7-carboxy-7-deazaguanine (CDG) to 7-cyano-7-deazaguanine (preQ(0)). The sequence is that of 7-cyano-7-deazaguanine synthase from Synechococcus sp. (strain RCC307).